A 481-amino-acid chain; its full sequence is Glycogen synthase (481 aa).

K16 is an ADP-alpha-D-glucose binding site.

Belongs to the glycosyltransferase 1 family. Bacterial/plant glycogen synthase subfamily.

It catalyses the reaction [(1-&gt;4)-alpha-D-glucosyl](n) + ADP-alpha-D-glucose = [(1-&gt;4)-alpha-D-glucosyl](n+1) + ADP + H(+). The protein operates within glycan biosynthesis; glycogen biosynthesis. Synthesizes alpha-1,4-glucan chains using ADP-glucose. In Cellvibrio japonicus (strain Ueda107) (Pseudomonas fluorescens subsp. cellulosa), this protein is Glycogen synthase.